Here is a 585-residue protein sequence, read N- to C-terminus: Ras-specific guanine nucleotide-releasing factor RalGPS1 (585 aa).

Residues Thr50–Gly289 form the Ras-GEF domain. Disordered stretches follow at residues Gly289–Ser342 and Arg378–Met410. Residues Ala303–Ala312 are compositionally biased toward low complexity. The PXXP signature appears at Pro330 to Pro333. The span at Thr385–Leu396 shows a compositional bias: polar residues. The 113-residue stretch at Val459–Lys571 folds into the PH domain. Residues Thr461–Glu585 are required for stimulation of nucleotide exchange by RALA.

Interacts with the SH3 domains of GRB2, NCK1, PLCG1 and SRC.

It localises to the cytoplasm. The protein localises to the cell membrane. Guanine nucleotide exchange factor for the small GTPase RALA. May be involved in cytoskeleton organization. The polypeptide is Ras-specific guanine nucleotide-releasing factor RalGPS1 (Ralgps1) (Mus musculus (Mouse)).